A 279-amino-acid chain; its full sequence is Protein phosphatase 1 regulatory subunit 3E (279 aa).

2 positions are modified to phosphoserine: Ser-16 and Ser-33. Residues 28 to 87 (RSQRPSLEEESEEEPGEGGTRPGARSRAHVPGRGRRARSAPAGGGGARTARSRSPDTRKR) are disordered. Positions 51 to 65 (ARSRAHVPGRGRRAR) are enriched in basic residues. Ser-66 carries the post-translational modification Phosphoserine. The PP1-binding motif signature appears at 87-90 (RVRF). The 106-residue stretch at 154 to 259 (AARLQAQRIC…NNGGRDYALL (106 aa)) folds into the CBM21 domain. The interval 176 to 198 (GSARVLDLAYEKRVSVRWSADGW) is glycogen-binding motif. Residues 248-256 (WDNNGGRDY) are substrate-binding motif.

Functionally, acts as a glycogen-targeting subunit for PP1. PP1 is involved in glycogen metabolism and contributes to the activation of glycogen synthase leading to an increase in glycogen synthesis. The polypeptide is Protein phosphatase 1 regulatory subunit 3E (Ppp1r3e) (Mus musculus (Mouse)).